The following is a 184-amino-acid chain: ATP synthase subunit b, chloroplastic (184 aa).

The chain crosses the membrane as a helical span at residues 27–49 (LATNLINLSVVIGVLIFFGKGVL).

Belongs to the ATPase B chain family. F-type ATPases have 2 components, F(1) - the catalytic core - and F(0) - the membrane proton channel. F(1) has five subunits: alpha(3), beta(3), gamma(1), delta(1), epsilon(1). F(0) has four main subunits: a(1), b(1), b'(1) and c(10-14). The alpha and beta chains form an alternating ring which encloses part of the gamma chain. F(1) is attached to F(0) by a central stalk formed by the gamma and epsilon chains, while a peripheral stalk is formed by the delta, b and b' chains.

Its subcellular location is the plastid. The protein localises to the chloroplast thylakoid membrane. Its function is as follows. F(1)F(0) ATP synthase produces ATP from ADP in the presence of a proton or sodium gradient. F-type ATPases consist of two structural domains, F(1) containing the extramembraneous catalytic core and F(0) containing the membrane proton channel, linked together by a central stalk and a peripheral stalk. During catalysis, ATP synthesis in the catalytic domain of F(1) is coupled via a rotary mechanism of the central stalk subunits to proton translocation. Component of the F(0) channel, it forms part of the peripheral stalk, linking F(1) to F(0). The polypeptide is ATP synthase subunit b, chloroplastic (Jasminum nudiflorum (Winter jasmine)).